Here is a 130-residue protein sequence, read N- to C-terminus: Small ribosomal subunit protein uS9 (130 aa).

This sequence belongs to the universal ribosomal protein uS9 family.

This is Small ribosomal subunit protein uS9 from Paraburkholderia phytofirmans (strain DSM 17436 / LMG 22146 / PsJN) (Burkholderia phytofirmans).